Here is a 475-residue protein sequence, read N- to C-terminus: ATP synthase subunit beta, chloroplastic (475 aa).

155 to 162 (GGAGVGKT) provides a ligand contact to ATP.

The protein belongs to the ATPase alpha/beta chains family. As to quaternary structure, F-type ATPases have 2 components, CF(1) - the catalytic core - and CF(0) - the membrane proton channel. CF(1) has five subunits: alpha(3), beta(3), gamma(1), delta(1), epsilon(1). CF(0) has four main subunits: a(1), b(1), b'(1) and c(9-12).

It localises to the plastid. The protein localises to the chloroplast thylakoid membrane. The catalysed reaction is ATP + H2O + 4 H(+)(in) = ADP + phosphate + 5 H(+)(out). Produces ATP from ADP in the presence of a proton gradient across the membrane. The catalytic sites are hosted primarily by the beta subunits. The polypeptide is ATP synthase subunit beta, chloroplastic (Pyropia yezoensis (Susabi-nori)).